The chain runs to 90 residues: Putative Fis-like DNA-binding protein (90 aa).

Residues 66–85 (QSRAAALLGIHRATLRKKLK) constitute a DNA-binding region (H-T-H motif).

It belongs to the transcriptional regulatory Fis family.

The chain is Putative Fis-like DNA-binding protein from Xylella fastidiosa (strain 9a5c).